The chain runs to 63 residues: Eumenitin VP1 (63 aa).

The first 22 residues, 1 to 22 (MRGTSFILFAVVVILGFLHANA), serve as a signal peptide directing secretion. AXPX repeat units follow at residues 22–25 (AEPL), 26–29 (ANPA), 32–35 (ANPD), 40–43 (ADPL), and 44–47 (ADPE). The propeptide occupies 23 to 48 (EPLANPAPLANPDPLANADPLADPEA).

In terms of tissue distribution, expressed by the venom gland.

It localises to the secreted. The protein resides in the target cell membrane. In terms of biological role, antimicrobial peptide with activities against the fungi B.cinerea (MIC=5 uM) and C.albicans (MIC=100 uM), the Gram-negative bacterium E.coli (MIC=25 uM) and the Gram-positive bacterium S.aureus (MIC=100 uM). Shows cytolytic activity against insect cell lines. Has no hemolytic activity against human erythrocytes. In vivo, peptide injection in the vicinity of the head and thorax of lepidopteran larvae induces feeding disorder followed by death due to starvation. In Eumenes pomiformis (Potter wasp), this protein is Eumenitin VP1.